Here is a 452-residue protein sequence, read N- to C-terminus: Exodeoxyribonuclease 7 large subunit (452 aa).

Belongs to the XseA family. Heterooligomer composed of large and small subunits.

It is found in the cytoplasm. The catalysed reaction is Exonucleolytic cleavage in either 5'- to 3'- or 3'- to 5'-direction to yield nucleoside 5'-phosphates.. Its function is as follows. Bidirectionally degrades single-stranded DNA into large acid-insoluble oligonucleotides, which are then degraded further into small acid-soluble oligonucleotides. This Bacillus thuringiensis (strain Al Hakam) protein is Exodeoxyribonuclease 7 large subunit.